Consider the following 217-residue polypeptide: ATP-dependent Clp protease proteolytic subunit 3 (217 aa).

The segment covering 1–13 has biased composition (low complexity); it reads MSPFTAGPAPART. The interval 1 to 23 is disordered; sequence MSPFTAGPAPARTPRAEEGDTPA. Catalysis depends on serine 108, which acts as the Nucleophile. Histidine 133 is a catalytic residue.

It belongs to the peptidase S14 family. As to quaternary structure, fourteen ClpP subunits assemble into 2 heptameric rings which stack back to back to give a disk-like structure with a central cavity, resembling the structure of eukaryotic proteasomes.

It is found in the cytoplasm. The catalysed reaction is Hydrolysis of proteins to small peptides in the presence of ATP and magnesium. alpha-casein is the usual test substrate. In the absence of ATP, only oligopeptides shorter than five residues are hydrolyzed (such as succinyl-Leu-Tyr-|-NHMec, and Leu-Tyr-Leu-|-Tyr-Trp, in which cleavage of the -Tyr-|-Leu- and -Tyr-|-Trp bonds also occurs).. Cleaves peptides in various proteins in a process that requires ATP hydrolysis. Has a chymotrypsin-like activity. Plays a major role in the degradation of misfolded proteins. The protein is ATP-dependent Clp protease proteolytic subunit 3 of Streptomyces coelicolor (strain ATCC BAA-471 / A3(2) / M145).